A 99-amino-acid polypeptide reads, in one-letter code: RNA-binding protein HI_1333 (99 aa).

A CRM domain is found at 2–98 (TTLSTKQKQF…SEEAKIQLPR (97 aa)).

This is RNA-binding protein HI_1333 from Haemophilus influenzae (strain ATCC 51907 / DSM 11121 / KW20 / Rd).